The primary structure comprises 205 residues: UPF0056 membrane protein MJ1677 (205 aa).

A run of 6 helical transmembrane segments spans residues I7 to I27, A49 to I69, S70 to V90, I112 to M132, F145 to A165, and G185 to L205.

The protein belongs to the UPF0056 (MarC) family.

It is found in the cell membrane. This chain is UPF0056 membrane protein MJ1677, found in Methanocaldococcus jannaschii (strain ATCC 43067 / DSM 2661 / JAL-1 / JCM 10045 / NBRC 100440) (Methanococcus jannaschii).